Consider the following 535-residue polypeptide: Probable glucomannan 4-beta-mannosyltransferase 14 (535 aa).

A helical transmembrane segment spans residues 42–62 (QVVSVLLFVDAAYMAIVVAIV). Residue Asp-131 is part of the active site. The substrate site is built by Asp-193 and Asp-195. The active site involves Asp-287. A run of 4 helical transmembrane segments spans residues 366–386 (IVVH…TVIF), 403–423 (ITIL…YWIL), 482–502 (IMVG…GRTY), and 503–523 (LYVY…GYVG).

The protein belongs to the glycosyltransferase 2 family. Plant cellulose synthase-like A subfamily.

It is found in the golgi apparatus membrane. The enzyme catalyses GDP-mannose + (glucomannan)n = GDP + (glucomannan)n+1.. In terms of biological role, probable mannan synthase which consists of a 4-beta-mannosyltransferase activity on mannan using GDP-mannose. The beta-1,4-mannan product is the backbone for galactomannan synthesis by galactomannan galactosyltransferase. Galactomannan is a noncellulosic polysaccharides of plant cell wall. This Arabidopsis thaliana (Mouse-ear cress) protein is Probable glucomannan 4-beta-mannosyltransferase 14.